The sequence spans 518 residues: Protein nucleotidyltransferase YdiU (518 aa).

Basic and acidic residues predominate over residues 1 to 10; the sequence is MTHLQFDNRL. The disordered stretch occupies residues 1-23; that stretch reads MTHLQFDNRLRAQLPGDPEQGPR. ATP contacts are provided by glycine 100, glycine 102, arginine 103, lysine 123, aspartate 135, glycine 136, arginine 193, and arginine 200. The Proton acceptor role is filled by aspartate 270. 2 residues coordinate Mg(2+): asparagine 271 and aspartate 280. Residue aspartate 280 participates in ATP binding.

This sequence belongs to the SELO family. It depends on Mg(2+) as a cofactor. Mn(2+) is required as a cofactor.

It catalyses the reaction L-seryl-[protein] + ATP = 3-O-(5'-adenylyl)-L-seryl-[protein] + diphosphate. The enzyme catalyses L-threonyl-[protein] + ATP = 3-O-(5'-adenylyl)-L-threonyl-[protein] + diphosphate. It carries out the reaction L-tyrosyl-[protein] + ATP = O-(5'-adenylyl)-L-tyrosyl-[protein] + diphosphate. The catalysed reaction is L-histidyl-[protein] + UTP = N(tele)-(5'-uridylyl)-L-histidyl-[protein] + diphosphate. It catalyses the reaction L-seryl-[protein] + UTP = O-(5'-uridylyl)-L-seryl-[protein] + diphosphate. The enzyme catalyses L-tyrosyl-[protein] + UTP = O-(5'-uridylyl)-L-tyrosyl-[protein] + diphosphate. Nucleotidyltransferase involved in the post-translational modification of proteins. It can catalyze the addition of adenosine monophosphate (AMP) or uridine monophosphate (UMP) to a protein, resulting in modifications known as AMPylation and UMPylation. This Xanthomonas campestris pv. campestris (strain B100) protein is Protein nucleotidyltransferase YdiU.